The chain runs to 367 residues: Nodulation protein 10 (367 aa).

Helical transmembrane passes span 15–37 (FDLL…WLHL), 46–66 (VFDL…SGFL), 88–108 (IFPA…VTGG), 109–129 (LNVT…LTAA), 155–175 (VLWT…LLEI), 183–203 (GALV…HFNI), 208–228 (NPFL…GVLA), 245–265 (WWLA…AAFI), 270–290 (AAPV…SAAH), 312–332 (MLVM…LWIV), and 335–355 (VGTV…AMKL).

Belongs to the acyltransferase 3 family.

Its subcellular location is the cell membrane. Not known. NodX allows Rhizobium leguminosarum biovar viciae strain TOM to nodulate Afghanistan peas. This chain is Nodulation protein 10 (nodX), found in Rhizobium leguminosarum bv. viciae.